The primary structure comprises 356 residues: Histidinol-phosphate aminotransferase (356 aa).

An N6-(pyridoxal phosphate)lysine modification is found at lysine 208.

Belongs to the class-II pyridoxal-phosphate-dependent aminotransferase family. Histidinol-phosphate aminotransferase subfamily. In terms of assembly, homodimer. Pyridoxal 5'-phosphate serves as cofactor.

It carries out the reaction L-histidinol phosphate + 2-oxoglutarate = 3-(imidazol-4-yl)-2-oxopropyl phosphate + L-glutamate. It functions in the pathway amino-acid biosynthesis; L-histidine biosynthesis; L-histidine from 5-phospho-alpha-D-ribose 1-diphosphate: step 7/9. In Lactococcus lactis subsp. cremoris (strain MG1363), this protein is Histidinol-phosphate aminotransferase.